We begin with the raw amino-acid sequence, 417 residues long: MKVTDLKQLGQQAKEASYTLGLMDTRQKNTLLNKMAAAIEANAPRILQANALDLEQAATHGISETMQDRLRLTEERITAMAEGIRQVATLPDPIGEVDKMWRNEAGLLIGQQRVPLGVIGIIYESRPNVTTDAASLCFKSGNAVILRGGKEAFHSNQILVTILQEALIQEAVSPHLIQFVDDTSRETAQQLMRLNDYLDVLIPRGGANLIKTVLTTATVPVIETGTGNCHIYVDKDAQLTMATEIIVNAKCQRPSVCNAAETLLIHQEVAEAFLPTIEKALKEFHVELRADERALAIFEEAIPATEQDWETEFLDFILAVKVVDSLDEAIQHINRYNTKHSESIISDNYFATQQFLQQVDAAAVYANASTRFTDGFEFGFGAEIGISTQKLHARGPMGLAELTSTKYVIYGNGQARS.

This sequence belongs to the gamma-glutamyl phosphate reductase family.

The protein resides in the cytoplasm. It carries out the reaction L-glutamate 5-semialdehyde + phosphate + NADP(+) = L-glutamyl 5-phosphate + NADPH + H(+). Its pathway is amino-acid biosynthesis; L-proline biosynthesis; L-glutamate 5-semialdehyde from L-glutamate: step 2/2. In terms of biological role, catalyzes the NADPH-dependent reduction of L-glutamate 5-phosphate into L-glutamate 5-semialdehyde and phosphate. The product spontaneously undergoes cyclization to form 1-pyrroline-5-carboxylate. This chain is Gamma-glutamyl phosphate reductase, found in Enterococcus faecalis (strain ATCC 700802 / V583).